The following is a 92-amino-acid chain: Small ribosomal subunit protein uS19 (92 aa).

This sequence belongs to the universal ribosomal protein uS19 family.

Functionally, protein S19 forms a complex with S13 that binds strongly to the 16S ribosomal RNA. The polypeptide is Small ribosomal subunit protein uS19 (Bacillus cereus (strain B4264)).